A 393-amino-acid polypeptide reads, in one-letter code: HORMA domain-containing protein 1 (393 aa).

The HORMA domain occupies 24 to 226 (QQSLVLVKRL…TPFHTFKVKV (203 aa)). Residues 322–393 (SKTSELDVSE…RKFSEPKERI (72 aa)) are disordered. The segment covering 352–361 (KSKENRKRTQ) has biased composition (basic and acidic residues). Serine 375 is modified (phosphoserine). Residues 382 to 385 (KRRK) carry the Nuclear localization signal motif.

Interacts with HORMAD2. Interacts with IHO1. Phosphorylated at Ser-376 in a SPO11-dependent manner.

The protein localises to the nucleus. The protein resides in the chromosome. Its function is as follows. Plays a key role in meiotic progression. Regulates 3 different functions during meiosis: ensures that sufficient numbers of processed DNA double-strand breaks (DSBs) are available for successful homology search by increasing the steady-state numbers of single-stranded DSB ends. Promotes synaptonemal-complex formation independently of its role in homology search. Plays a key role in the male mid-pachytene checkpoint and the female meiotic prophase checkpoint: required for efficient build-up of ATR activity on unsynapsed chromosome regions, a process believed to form the basis of meiotic silencing of unsynapsed chromatin (MSUC) and meiotic prophase quality control in both sexes. In Bos taurus (Bovine), this protein is HORMA domain-containing protein 1 (HORMAD1).